Consider the following 214-residue polypeptide: Probable DNA (cytosine-5)-methyltransferase (214 aa).

Cysteine 62 is an active-site residue.

Belongs to the class I-like SAM-binding methyltransferase superfamily. C5-methyltransferase family. As to quaternary structure, probably requires another subunit for function.

It catalyses the reaction a 2'-deoxycytidine in DNA + S-adenosyl-L-methionine = a 5-methyl-2'-deoxycytidine in DNA + S-adenosyl-L-homocysteine + H(+). Functionally, this is probably the methylase that recognizes and modifies 5'-CpG-3'. The protein is Probable DNA (cytosine-5)-methyltransferase of Dryophytes versicolor (chameleon treefrog).